A 177-amino-acid chain; its full sequence is UPF0114 protein HP_0189 (177 aa).

A run of 3 helical transmembrane segments spans residues 15-35 (WLLAPLCIAMSLVLVVLGYVF), 54-74 (LVLSALGLVDLLFMAGLVLMV), and 145-165 (PIFWQVVIHLVFVCSALLAAV).

It belongs to the UPF0114 family.

It is found in the cell membrane. In Helicobacter pylori (strain ATCC 700392 / 26695) (Campylobacter pylori), this protein is UPF0114 protein HP_0189.